The chain runs to 327 residues: Undecaprenyl-phosphate 4-deoxy-4-formamido-L-arabinose transferase (327 aa).

Transmembrane regions (helical) follow at residues 236–256 (LSVFGSIIAVLGFTLSVLLVV) and 270–290 (VFMLFAVLFMFIGAQFVAMGL).

This sequence belongs to the glycosyltransferase 2 family.

It is found in the cell inner membrane. It carries out the reaction UDP-4-deoxy-4-formamido-beta-L-arabinose + di-trans,octa-cis-undecaprenyl phosphate = 4-deoxy-4-formamido-alpha-L-arabinopyranosyl di-trans,octa-cis-undecaprenyl phosphate + UDP. Its pathway is glycolipid biosynthesis; 4-amino-4-deoxy-alpha-L-arabinose undecaprenyl phosphate biosynthesis; 4-amino-4-deoxy-alpha-L-arabinose undecaprenyl phosphate from UDP-4-deoxy-4-formamido-beta-L-arabinose and undecaprenyl phosphate: step 1/2. It functions in the pathway bacterial outer membrane biogenesis; lipopolysaccharide biosynthesis. In terms of biological role, catalyzes the transfer of 4-deoxy-4-formamido-L-arabinose from UDP to undecaprenyl phosphate. The modified arabinose is attached to lipid A and is required for resistance to polymyxin and cationic antimicrobial peptides. The sequence is that of Undecaprenyl-phosphate 4-deoxy-4-formamido-L-arabinose transferase from Enterobacter sp. (strain 638).